The sequence spans 63 residues: Large ribosomal subunit protein uL30 (63 aa).

This sequence belongs to the universal ribosomal protein uL30 family. As to quaternary structure, part of the 50S ribosomal subunit.

This chain is Large ribosomal subunit protein uL30, found in Bradyrhizobium sp. (strain ORS 278).